The chain runs to 121 residues: UPF0344 protein BC_1150 (121 aa).

Transmembrane regions (helical) follow at residues 6–26 (ITAWALGLILFFVAYSLYSAG), 38–58 (LMYIIIIVTGFMLYMSIVKTA), 65–85 (WYGLKMLAGILVIGGMEMVLV), and 92–112 (PTGAVWGLFIVALVAVFYLGL).

It belongs to the UPF0344 family.

Its subcellular location is the cell membrane. The sequence is that of UPF0344 protein BC_1150 from Bacillus cereus (strain ATCC 14579 / DSM 31 / CCUG 7414 / JCM 2152 / NBRC 15305 / NCIMB 9373 / NCTC 2599 / NRRL B-3711).